The primary structure comprises 52 residues: Large ribosomal subunit protein eL39 (52 aa).

The protein belongs to the eukaryotic ribosomal protein eL39 family.

The chain is Large ribosomal subunit protein eL39 (RPL39) from Tetrahymena thermophila (strain SB210).